Here is a 290-residue protein sequence, read N- to C-terminus: ATP synthase gamma chain (290 aa).

This sequence belongs to the ATPase gamma chain family. F-type ATPases have 2 components, CF(1) - the catalytic core - and CF(0) - the membrane proton channel. CF(1) has five subunits: alpha(3), beta(3), gamma(1), delta(1), epsilon(1). CF(0) has three main subunits: a, b and c.

The protein localises to the cell inner membrane. Its function is as follows. Produces ATP from ADP in the presence of a proton gradient across the membrane. The gamma chain is believed to be important in regulating ATPase activity and the flow of protons through the CF(0) complex. This Bradyrhizobium diazoefficiens (strain JCM 10833 / BCRC 13528 / IAM 13628 / NBRC 14792 / USDA 110) protein is ATP synthase gamma chain.